Consider the following 461-residue polypeptide: Asparagine--tRNA ligase (461 aa).

This sequence belongs to the class-II aminoacyl-tRNA synthetase family. In terms of assembly, homodimer.

The protein resides in the cytoplasm. It catalyses the reaction tRNA(Asn) + L-asparagine + ATP = L-asparaginyl-tRNA(Asn) + AMP + diphosphate + H(+). The polypeptide is Asparagine--tRNA ligase (Nitratidesulfovibrio vulgaris (strain ATCC 29579 / DSM 644 / CCUG 34227 / NCIMB 8303 / VKM B-1760 / Hildenborough) (Desulfovibrio vulgaris)).